The primary structure comprises 146 residues: uncharacterized protein (146 aa).

The region spanning 1–137 is the HTH marR-type domain; that stretch reads MLSQEFFNSF…TINVMNQIHK (137 aa).

This is an uncharacterized protein from Staphylococcus aureus (strain MW2).